The following is a 92-amino-acid chain: Large ribosomal subunit protein uL23c (92 aa).

This sequence belongs to the universal ribosomal protein uL23 family. In terms of assembly, part of the 50S ribosomal subunit.

The protein resides in the plastid. Its subcellular location is the chloroplast. Functionally, binds to 23S rRNA. The sequence is that of Large ribosomal subunit protein uL23c (rpl23) from Chara vulgaris (Common stonewort).